A 317-amino-acid polypeptide reads, in one-letter code: HTH-type transcriptional repressor PA14_22550 (317 aa).

The HTH lysR-type domain maps to 1–59 (MDKLTAMATFVKVVDAGSFTRAADALGLPKARVSQRVSDLEKHLGVRLLNRTTRALSLT). A DNA-binding region (H-T-H motif) is located at residues 19-38 (FTRAADALGLPKARVSQRVS).

This sequence belongs to the LysR transcriptional regulatory family.

Its function is as follows. Represses the transcription of the operon that consists of PA14_22510 to PA14_22540. The protein is HTH-type transcriptional repressor PA14_22550 of Pseudomonas aeruginosa (strain UCBPP-PA14).